A 221-amino-acid polypeptide reads, in one-letter code: Thymidylate kinase (221 aa).

11-18 (GPDGAGKT) is an ATP binding site.

It belongs to the thymidylate kinase family.

The catalysed reaction is dTMP + ATP = dTDP + ADP. Functionally, phosphorylation of dTMP to form dTDP in both de novo and salvage pathways of dTTP synthesis. The protein is Thymidylate kinase of Lactiplantibacillus plantarum (strain ATCC BAA-793 / NCIMB 8826 / WCFS1) (Lactobacillus plantarum).